The following is a 199-amino-acid chain: MKAQSSVLPVVVGILVVIIAVAVGVYVYNQYVMLSSPSASSSTGTSTGPSKISIPYSSSNKTVFLTIVVESSSNVNQFNFNGTSSGSLVIYIPAGSTVIVKFINQESLPHNLVLLQNSTPTPQSPEISSDGKIIDIVGATTSNYDVNGISGGASAEGVWGPISAGDYMLVCGILGHAASGMWAVLVASNNVTAPYAVID.

Residues 7 to 27 form a helical; Signal-anchor for type II membrane protein membrane-spanning segment; it reads VLPVVVGILVVIIAVAVGVYV. Residues 79–188 enclose the Plastocyanin-like domain; that stretch reads NFNGTSSGSL…SGMWAVLVAS (110 aa). 4 residues coordinate Cu cation: His110, Cys171, His176, and Met181.

It belongs to the multicopper oxidase family.

It localises to the cell membrane. Functionally, the 4 redox proteins SoxE, SoxF, SoxG and SoxH probably form part of a membrane respiratory complex together with SoxM, a catalytic subunit of cytochrome oxidase. The polypeptide is Sulfocyanin (soxE) (Sulfolobus acidocaldarius (strain ATCC 33909 / DSM 639 / JCM 8929 / NBRC 15157 / NCIMB 11770)).